A 278-amino-acid chain; its full sequence is MQIIHTIRELRAWRKNAGKVAFVPTMGNLHEGHLALVREAKKRADSVVVSIFVNRLQFGQGEDFDKYPRTLQQDADKLAAEGIAVVFAPDEKELYPNVEQRYNVEPPNLQNELCGKFRPGHFRGVATVVSKLFHIVSPDIACFGKKDYQQLAVIKGFVEDLNFDVEIVPVDTGRAEDGLALSSRNQYLSAAERDEAPRLYRELKAVAESLVQGSLDYAGLEKRAVQSLTEYGWVVDYVEIRRADTLEVARAGDKKLVVLAAACLGTTRLIDNLEIKLP.

Residue 26-33 coordinates ATP; that stretch reads MGNLHEGH. The Proton donor role is filled by histidine 33. Glutamine 57 contacts (R)-pantoate. Glutamine 57 is a beta-alanine binding site. An ATP-binding site is contributed by 144 to 147; the sequence is GKKD. Residue glutamine 150 coordinates (R)-pantoate. ATP-binding positions include glycine 173 and 181 to 184; that span reads LSSR.

Belongs to the pantothenate synthetase family. Homodimer.

The protein localises to the cytoplasm. It catalyses the reaction (R)-pantoate + beta-alanine + ATP = (R)-pantothenate + AMP + diphosphate + H(+). Its pathway is cofactor biosynthesis; (R)-pantothenate biosynthesis; (R)-pantothenate from (R)-pantoate and beta-alanine: step 1/1. In terms of biological role, catalyzes the condensation of pantoate with beta-alanine in an ATP-dependent reaction via a pantoyl-adenylate intermediate. This chain is Pantothenate synthetase, found in Neisseria meningitidis serogroup B (strain ATCC BAA-335 / MC58).